The primary structure comprises 68 residues: Kasstasin (68 aa).

The signal sequence occupies residues 1–20 (MMKKSMLLLFFLGMVSFSLA). The propeptide occupies 21–44 (DDKREDEGEEKRADEGEEKRAAEE). Residues 22 to 41 (DKREDEGEEKRADEGEEKRA) form a disordered region. At lysine 67 the chain carries Lysine amide.

This sequence belongs to the frog skin active peptide (FSAP) family. Brevinin subfamily. Expressed by the skin dorsal glands.

The protein resides in the secreted. Functionally, peptide with potent vasoconstrictor properties (EC50=25 pM). Has moderate antimicrobial activity against Gram-positive bacterium S.aureus (MIC=55 uM) and against Gram-negative bacterium E.coli (MIC=110 uM). Not active against fungus C.albicans. Has weak hemolytic activity against horse erythrocytes. The chain is Kasstasin from Phlyctimantis maculatus (Red-legged running frog).